The following is a 294-amino-acid chain: Cytidine deaminase (294 aa).

2 consecutive CMP/dCMP-type deaminase domains span residues 48–168 (DEDA…FGPK) and 186–294 (LTGD…TLLA). 89-91 (NME) contacts substrate. Residue His-102 coordinates Zn(2+). The active-site Proton donor is Glu-104. Zn(2+) is bound by residues Cys-129 and Cys-132.

This sequence belongs to the cytidine and deoxycytidylate deaminase family. In terms of assembly, homodimer. It depends on Zn(2+) as a cofactor.

It carries out the reaction cytidine + H2O + H(+) = uridine + NH4(+). The enzyme catalyses 2'-deoxycytidine + H2O + H(+) = 2'-deoxyuridine + NH4(+). Its function is as follows. This enzyme scavenges exogenous and endogenous cytidine and 2'-deoxycytidine for UMP synthesis. The sequence is that of Cytidine deaminase from Enterobacter sp. (strain 638).